A 209-amino-acid polypeptide reads, in one-letter code: Thiamine-phosphate synthase (209 aa).

Residues 37 to 41 (QYRDK) and Asn-69 contribute to the 4-amino-2-methyl-5-(diphosphooxymethyl)pyrimidine site. Mg(2+)-binding residues include Asp-70 and Asp-89. Ser-108 serves as a coordination point for 4-amino-2-methyl-5-(diphosphooxymethyl)pyrimidine. 135 to 137 (SPT) is a binding site for 2-[(2R,5Z)-2-carboxy-4-methylthiazol-5(2H)-ylidene]ethyl phosphate. Lys-138 contacts 4-amino-2-methyl-5-(diphosphooxymethyl)pyrimidine. 2-[(2R,5Z)-2-carboxy-4-methylthiazol-5(2H)-ylidene]ethyl phosphate contacts are provided by residues Gly-165 and 185-186 (VS).

This sequence belongs to the thiamine-phosphate synthase family. Requires Mg(2+) as cofactor.

It carries out the reaction 2-[(2R,5Z)-2-carboxy-4-methylthiazol-5(2H)-ylidene]ethyl phosphate + 4-amino-2-methyl-5-(diphosphooxymethyl)pyrimidine + 2 H(+) = thiamine phosphate + CO2 + diphosphate. It catalyses the reaction 2-(2-carboxy-4-methylthiazol-5-yl)ethyl phosphate + 4-amino-2-methyl-5-(diphosphooxymethyl)pyrimidine + 2 H(+) = thiamine phosphate + CO2 + diphosphate. The catalysed reaction is 4-methyl-5-(2-phosphooxyethyl)-thiazole + 4-amino-2-methyl-5-(diphosphooxymethyl)pyrimidine + H(+) = thiamine phosphate + diphosphate. The protein operates within cofactor biosynthesis; thiamine diphosphate biosynthesis; thiamine phosphate from 4-amino-2-methyl-5-diphosphomethylpyrimidine and 4-methyl-5-(2-phosphoethyl)-thiazole: step 1/1. Its function is as follows. Condenses 4-methyl-5-(beta-hydroxyethyl)thiazole monophosphate (THZ-P) and 2-methyl-4-amino-5-hydroxymethyl pyrimidine pyrophosphate (HMP-PP) to form thiamine monophosphate (TMP). This chain is Thiamine-phosphate synthase, found in Halorhodospira halophila (strain DSM 244 / SL1) (Ectothiorhodospira halophila (strain DSM 244 / SL1)).